We begin with the raw amino-acid sequence, 211 residues long: uncharacterized protein (211 aa).

A coiled-coil region spans residues isoleucine 105 to arginine 143. The helical transmembrane segment at glutamine 191 to phenylalanine 211 threads the bilayer.

It belongs to the CCDC90 family.

The protein localises to the mitochondrion. It localises to the membrane. This is an uncharacterized protein from Schizosaccharomyces pombe (strain 972 / ATCC 24843) (Fission yeast).